The chain runs to 555 residues: Potassium-transporting ATPase potassium-binding subunit (555 aa).

Helical transmembrane passes span 2 to 22 (IWVA…PTGI), 60 to 80 (QYAL…YFIF), 130 to 150 (IGIT…VMAF), 173 to 193 (VFLP…VPQT), 246 to 266 (MSNI…PFTY), 278 to 298 (ILFV…TTSE), 374 to 394 (AGFV…GLMV), 412 to 432 (LIAV…ALAL), 483 to 503 (LVMF…AASL), and 525 to 545 (GIFI…MLVL).

It belongs to the KdpA family. The system is composed of three essential subunits: KdpA, KdpB and KdpC.

Its subcellular location is the cell membrane. In terms of biological role, part of the high-affinity ATP-driven potassium transport (or Kdp) system, which catalyzes the hydrolysis of ATP coupled with the electrogenic transport of potassium into the cytoplasm. This subunit binds the extracellular potassium ions and delivers the ions to the membrane domain of KdpB through an intramembrane tunnel. In Bacillus cereus (strain AH820), this protein is Potassium-transporting ATPase potassium-binding subunit.